We begin with the raw amino-acid sequence, 224 residues long: UPF0758 protein CV_3079 (224 aa).

The region spanning 102-224 is the MPN domain; it reads ALSSPQQVRD…AESFAERGWL (123 aa). 3 residues coordinate Zn(2+): His-173, His-175, and Asp-186. The short motif at 173–186 is the JAMM motif element; that stretch reads HNHPSGVSEPSSAD.

Belongs to the UPF0758 family.

The sequence is that of UPF0758 protein CV_3079 from Chromobacterium violaceum (strain ATCC 12472 / DSM 30191 / JCM 1249 / CCUG 213 / NBRC 12614 / NCIMB 9131 / NCTC 9757 / MK).